The sequence spans 180 residues: MTTIISVRRNGHVVIGGDGQATIGNTIMKGNVRKVRRLYYNDKVIAGFAGGTADAFTLFELFERKLESYQGHLVKAAVELAKDWRTDRRLRRLEALLAVADENASLIITGNGDVIQPEKDLIAIGSGGPYAQSAARALLENTNFSAREIVKKSLVIAGDICIYTNQFHTIEELTSTAEGY.

The active site involves threonine 2. 3 residues coordinate Na(+): glycine 158, cysteine 161, and threonine 164.

This sequence belongs to the peptidase T1B family. HslV subfamily. In terms of assembly, a double ring-shaped homohexamer of HslV is capped on each side by a ring-shaped HslU homohexamer. The assembly of the HslU/HslV complex is dependent on binding of ATP.

It localises to the cytoplasm. The enzyme catalyses ATP-dependent cleavage of peptide bonds with broad specificity.. With respect to regulation, allosterically activated by HslU binding. In terms of biological role, protease subunit of a proteasome-like degradation complex believed to be a general protein degrading machinery. The protein is ATP-dependent protease subunit HslV of Baumannia cicadellinicola subsp. Homalodisca coagulata.